A 600-amino-acid polypeptide reads, in one-letter code: Nisin transport ATP-binding protein NisT (600 aa).

5 helical membrane passes run 34-54 (AIYLIVLNAITAFVPLASLFI), 69-89 (LINIIIIYFIVQVITTVLGQL), 147-167 (AIIVELSSFISLLSSLFFIGT), 168-188 (WNIGVAILLLIVPVLSLVLFL), and 260-280 (IFLDFILNLINILTIFAMILS). Residues 34–317 (AIYLIVLNAI…MIQNIYIIYN (284 aa)) form the ABC transmembrane type-1 domain. The region spanning 352–592 (VKVINLSYVY…CQYYQELYYS (241 aa)) is the ABC transporter domain. Position 386 to 393 (386 to 393 (GKNGSGKS)) interacts with ATP.

Belongs to the ABC transporter superfamily. Nisin exporter (TC 3.A.1.111.3) family.

It localises to the cell membrane. Probably implicated in the export process of the lantibiotic nisin. This chain is Nisin transport ATP-binding protein NisT (nisT), found in Lactococcus lactis subsp. lactis (Streptococcus lactis).